Here is a 214-residue protein sequence, read N- to C-terminus: 3-demethoxyubiquinol 3-hydroxylase (214 aa).

Positions 63, 93, 96, 145, 177, and 180 each coordinate Fe cation.

The protein belongs to the COQ7 family. Fe cation serves as cofactor.

The protein localises to the cell membrane. The catalysed reaction is a 5-methoxy-2-methyl-3-(all-trans-polyprenyl)benzene-1,4-diol + AH2 + O2 = a 3-demethylubiquinol + A + H2O. It participates in cofactor biosynthesis; ubiquinone biosynthesis. Functionally, catalyzes the hydroxylation of 2-nonaprenyl-3-methyl-6-methoxy-1,4-benzoquinol during ubiquinone biosynthesis. This is 3-demethoxyubiquinol 3-hydroxylase from Nitrosococcus oceani (strain ATCC 19707 / BCRC 17464 / JCM 30415 / NCIMB 11848 / C-107).